We begin with the raw amino-acid sequence, 322 residues long: Extracellular metalloprotease AFUB_008060 (322 aa).

A signal peptide spans 1–22 (MLPFNSCVYVLLIISLMSNCRA). N-linked (GlcNAc...) asparagine glycosylation is found at asparagine 123 and asparagine 197. Histidine 233 contributes to the Zn(2+) binding site. Residue glutamate 234 is part of the active site. Residue histidine 237 participates in Zn(2+) binding. Cysteine 272 and cysteine 299 form a disulfide bridge.

This sequence belongs to the peptidase M43B family.

The protein resides in the secreted. Its function is as follows. Secreted metalloproteinase that allows assimilation of proteinaceous substrates. Plays a pivotal role as a pathogenicity determinant during infections and contributes to the ability of the pathogen to persist within the mammalian host. This is Extracellular metalloprotease AFUB_008060 from Aspergillus fumigatus (strain CBS 144.89 / FGSC A1163 / CEA10) (Neosartorya fumigata).